The primary structure comprises 430 residues: Enolase (430 aa).

Residue glutamine 165 participates in (2R)-2-phosphoglycerate binding. The active-site Proton donor is the glutamate 207. Residues aspartate 244, glutamate 287, and aspartate 314 each coordinate Mg(2+). Lysine 339, arginine 368, serine 369, and lysine 390 together coordinate (2R)-2-phosphoglycerate. The active-site Proton acceptor is lysine 339.

The protein belongs to the enolase family. As to quaternary structure, component of the RNA degradosome, a multiprotein complex involved in RNA processing and mRNA degradation. Mg(2+) serves as cofactor.

The protein localises to the cytoplasm. It is found in the secreted. It localises to the cell surface. The enzyme catalyses (2R)-2-phosphoglycerate = phosphoenolpyruvate + H2O. The protein operates within carbohydrate degradation; glycolysis; pyruvate from D-glyceraldehyde 3-phosphate: step 4/5. Its function is as follows. Catalyzes the reversible conversion of 2-phosphoglycerate (2-PG) into phosphoenolpyruvate (PEP). It is essential for the degradation of carbohydrates via glycolysis. The sequence is that of Enolase from Xanthomonas campestris pv. campestris (strain 8004).